The chain runs to 543 residues: Coiled-coil domain-containing protein 9 (543 aa).

2 stretches are compositionally biased toward basic and acidic residues: residues 38-47 (IEEDRKKAEL) and 59-72 (RSME…EEKS). Residues 38-543 (IEEDRKKAEL…SGEAWPFANA (506 aa)) form a disordered region. Phosphothreonine is present on Thr-94. Omega-N-methylarginine is present on residues Arg-106, Arg-120, Arg-126, and Arg-128. An asymmetric dimethylarginine mark is found at Arg-129, Arg-131, and Arg-133. Ser-135 carries the post-translational modification Phosphoserine. Composition is skewed to basic and acidic residues over residues 146-183 (TSDR…REGV), 192-212 (FLDD…DRRE), and 225-239 (DFER…ERQG). A coiled-coil region spans residues 147-183 (SDRKSKEWEERRRQNIEKMNEEMEKIAEYERNQREGV). 2 positions are modified to phosphoserine: Ser-246 and Ser-253. Basic and acidic residues-rich tracts occupy residues 256 to 277 (GRER…QERL), 287 to 300 (WRRE…DGMF), 309 to 318 (ELSHRYDDQA), and 359 to 372 (YSDH…REEA). 2 positions are modified to phosphoserine: Ser-374 and Ser-384. Over residues 376–394 (APESSQSISLEETPTQASE) the composition is skewed to polar residues. Acidic residues predominate over residues 405-453 (EDGEEDVGEEEEGEEEGEDEEDEEWEDVSEDVTEEEEEEEEEFEEDEEG). Positions 422–452 (EDEEDEEWEDVSEDVTEEEEEEEEEFEEDEE) form a coiled coil. Ser-533 bears the Phosphoserine mark.

Probable component of the exon junction complex (EJC); the association is RNA-dependent.

Its function is as follows. Probable component of the exon junction complex (EJC), a multiprotein complex that associates immediately upstream of the exon-exon junction on mRNAs and serves as a positional landmark for the intron exon structure of genes and directs post-transcriptional processes in the cytoplasm such as mRNA export, nonsense-mediated mRNA decay (NMD) or translation. In Mus musculus (Mouse), this protein is Coiled-coil domain-containing protein 9 (Ccdc9).